The primary structure comprises 407 residues: Tryptophan synthase beta chain (407 aa).

The span at 1–11 shows a compositional bias: polar residues; the sequence is MSTAPSQQHAS. The interval 1-25 is disordered; it reads MSTAPSQQHASAQVPDPRGRFGDFG. An N6-(pyridoxal phosphate)lysine modification is found at Lys-100.

It belongs to the TrpB family. Tetramer of two alpha and two beta chains. Pyridoxal 5'-phosphate is required as a cofactor.

It catalyses the reaction (1S,2R)-1-C-(indol-3-yl)glycerol 3-phosphate + L-serine = D-glyceraldehyde 3-phosphate + L-tryptophan + H2O. Its pathway is amino-acid biosynthesis; L-tryptophan biosynthesis; L-tryptophan from chorismate: step 5/5. Its function is as follows. The beta subunit is responsible for the synthesis of L-tryptophan from indole and L-serine. This chain is Tryptophan synthase beta chain, found in Rhodopirellula baltica (strain DSM 10527 / NCIMB 13988 / SH1).